A 1105-amino-acid polypeptide reads, in one-letter code: Protein phosphatase 1 regulatory subunit 26 (1105 aa).

Disordered regions lie at residues 228-382 (LNDK…NKLA), 444-468 (QSTY…DSLV), 504-526 (TSPE…AKAM), and 589-748 (LNRG…DSDD). A compositionally biased stretch (basic and acidic residues) spans 275–285 (LLRKHASDSKL). The segment covering 306-317 (TKTSSPSPKSTP) has biased composition (low complexity). Residues 359–368 (SPTSANSLTH) are compositionally biased toward polar residues. Residues 451 to 460 (TEPPPPPPEP) show a composition bias toward pro residues. Residues 504–516 (TSPELGSQSSKLS) are compositionally biased toward polar residues. Over residues 602–612 (SYSSGDKSSSL) the composition is skewed to low complexity. Residues 628–647 (SKRKYKKRPKDGKSQCKKRV) are compositionally biased toward basic residues. Basic and acidic residues predominate over residues 686–701 (NSLEKSKKRREEKAVE). Residues 705–715 (PSCSSSPQGNK) show a composition bias toward polar residues. Residues 733–742 (RALDDAHESS) show a composition bias toward basic and acidic residues.

It is found in the nucleus. Its subcellular location is the nucleolus. In terms of biological role, may inhibit phosphatase activity of protein phosphatase 1 (PP1) complexes. May positively regulate cell proliferation. This is Protein phosphatase 1 regulatory subunit 26 (ppp1r26) from Xenopus laevis (African clawed frog).